The sequence spans 103 residues: Large ribosomal subunit protein uL24 (103 aa).

The protein belongs to the universal ribosomal protein uL24 family. As to quaternary structure, part of the 50S ribosomal subunit.

Its function is as follows. One of two assembly initiator proteins, it binds directly to the 5'-end of the 23S rRNA, where it nucleates assembly of the 50S subunit. In terms of biological role, one of the proteins that surrounds the polypeptide exit tunnel on the outside of the subunit. This chain is Large ribosomal subunit protein uL24, found in Rhizobium meliloti (strain 1021) (Ensifer meliloti).